The primary structure comprises 202 residues: Regulator of G-protein signaling 16 (202 aa).

Residues cysteine 2 and cysteine 12 are each lipidated (S-palmitoyl cysteine). In terms of domain architecture, RGS spans 65 to 181; the sequence is SFDLLLSSKN…LKSPAYRDLA (117 aa). Phosphotyrosine; by EGFR is present on tyrosine 168. Tyrosine 177 is subject to Phosphotyrosine. The segment at 183 to 202 is disordered; that stretch reads QATAASASPSSSSPAEPLHT.

As to quaternary structure, interacts with GNAI1 and GNAQ. Interacts with GNAI3, GNAI3 and GNAO1. Post-translationally, palmitoylated on Cys-2 and/or Cys-12. In terms of processing, phosphorylated. Phosphorylation at Tyr-168 by EGFR enhances GTPase accelerating (GAP) activity toward GNAI1.

The protein localises to the membrane. Functionally, regulates G protein-coupled receptor signaling cascades. Inhibits signal transduction by increasing the GTPase activity of G protein alpha subunits, thereby driving them into their inactive GDP-bound form. Plays an important role in the phototransduction cascade by regulating the lifetime and effective concentration of activated transducin alpha. May regulate extra and intracellular mitogenic signals. This is Regulator of G-protein signaling 16 (RGS16) from Bos taurus (Bovine).